Here is an 889-residue protein sequence, read N- to C-terminus: Phosphofurin acidic cluster sorting protein 2 (889 aa).

Disordered stretches follow at residues 180-246 (DHED…TSMT), 293-463 (LDME…PDAR), and 687-740 (SSAT…SQGV). Residues 343-358 (SHKEPPSPADVPEKTR) show a composition bias toward basic and acidic residues. 5 positions are modified to phosphoserine: Ser390, Ser416, Ser453, Ser691, and Ser694. Low complexity-rich tracts occupy residues 687–720 (SSAT…KEAS) and 727–737 (PSVSGGLSSPS).

Belongs to the PACS family. In terms of assembly, interacts with BID and PKD2. Interacts with SIRT1. Interacts with HDAC1. Interacts with TRPV1. Interacts with WDR37. As to quaternary structure, (Microbial infection) Interacts with HIV-1 Nef. In terms of tissue distribution, broadly expressed, with greatest levels in skeletal muscle followed by heart, brain, pancreas and testis.

The protein resides in the endoplasmic reticulum. It localises to the mitochondrion. Its function is as follows. Multifunctional sorting protein that controls the endoplasmic reticulum (ER)-mitochondria communication, including the apposition of mitochondria with the ER and ER homeostasis. In addition, in response to apoptotic inducer, translocates BIB to mitochondria, which initiates a sequence of events including the formation of mitochondrial truncated BID, the release of cytochrome c, the activation of caspase-3 thereby causing cell death. May also be involved in ion channel trafficking, directing acidic cluster-containing ion channels to distinct subcellular compartments. The sequence is that of Phosphofurin acidic cluster sorting protein 2 from Homo sapiens (Human).